A 465-amino-acid chain; its full sequence is GDNF family receptor alpha-2 (465 aa).

The N-terminal stretch at 1–21 (MILANAFCIVLFVDETLRSLA) is a signal peptide. 14 disulfide bridges follow: cysteine 40–cysteine 93, cysteine 47–cysteine 53, cysteine 63–cysteine 78, cysteine 95–cysteine 105, cysteine 159–cysteine 220, cysteine 166–cysteine 172, cysteine 183–cysteine 198, cysteine 193–cysteine 239, cysteine 222–cysteine 227, cysteine 249–cysteine 321, cysteine 256–cysteine 262, cysteine 273–cysteine 291, cysteine 283–cysteine 345, and cysteine 323–cysteine 333. 3 N-linked (GlcNAc...) asparagine glycosylation sites follow: asparagine 355, asparagine 387, and asparagine 412. Serine 445 carries the GPI-anchor amidated serine lipid modification. The propeptide at 446 to 465 (RHRAARILPAVPIVLLKLLL) is removed in mature form.

This sequence belongs to the GDNFR family. Interacts with NRTN ligand and RET: forms a 2:2:2 ternary complex composed of NRTN ligand, GFRA2 and RET receptor.

The protein localises to the cell membrane. Functionally, receptor for neurturin (NRTN), a growth factor that supports the survival of sympathetic neurons. NRTN-binding leads to autophosphorylation and activation of the RET receptor. This chain is GDNF family receptor alpha-2 (GFRA2), found in Gallus gallus (Chicken).